A 600-amino-acid polypeptide reads, in one-letter code: Elongation factor 4 (600 aa).

Residues 4 to 186 form the tr-type G domain; it reads SKIRNFSIIA…AIVNKIPAPY (183 aa). Residues 16-21 and 133-136 contribute to the GTP site; these read DHGKST and NKVD.

It belongs to the TRAFAC class translation factor GTPase superfamily. Classic translation factor GTPase family. LepA subfamily.

It localises to the cell membrane. It carries out the reaction GTP + H2O = GDP + phosphate + H(+). Functionally, required for accurate and efficient protein synthesis under certain stress conditions. May act as a fidelity factor of the translation reaction, by catalyzing a one-codon backward translocation of tRNAs on improperly translocated ribosomes. Back-translocation proceeds from a post-translocation (POST) complex to a pre-translocation (PRE) complex, thus giving elongation factor G a second chance to translocate the tRNAs correctly. Binds to ribosomes in a GTP-dependent manner. This is Elongation factor 4 from Mesoplasma florum (strain ATCC 33453 / NBRC 100688 / NCTC 11704 / L1) (Acholeplasma florum).